Here is a 741-residue protein sequence, read N- to C-terminus: Alpha-1,6-mannosylglycoprotein 6-beta-N-acetylglucosaminyltransferase A (741 aa).

At 1-13 (MALFTPWKLSSQK) the chain is on the cytoplasmic side. The chain crosses the membrane as a helical; Signal-anchor for type II membrane protein span at residues 14 to 30 (LGFFLVTFGFIWGMMLL). Over 31–741 (HFTIQQRTQP…GQVALCKDCL (711 aa)) the chain is Lumenal. Residues N110, N115, and N118 are each glycosylated (N-linked (GlcNAc...) asparagine). Intrachain disulfides connect C145–C183, C156–C196, C172–C338, C372–C626, C649–C724, C653–C726, C660–C713, C681–C702, and C737–C740. The segment at 213 to 741 (NSLAEIRTDF…GQVALCKDCL (529 aa)) is sufficient for catalytic activity. An important for activity in FGF2 release region spans residues 264-269 (KRKRKK). N334 carries an N-linked (GlcNAc...) asparagine glycan. 378 to 379 (DS) is a substrate binding site. N-linked (GlcNAc...) asparagine glycans are attached at residues N433 and N447. A UDP-N-acetyl-alpha-D-glucosamine-binding site is contributed by E526. Residue K554 participates in substrate binding.

It belongs to the glycosyltransferase 18 family. In terms of processing, N-glycosylated. Post-translationally, a secreted form is released from the membrane after cleavage by gamma-secretase.

It is found in the golgi apparatus membrane. The protein resides in the secreted. It carries out the reaction N(4)-{beta-D-GlcNAc-(1-&gt;2)-[beta-D-GlcNAc-(1-&gt;4)]-alpha-D-Man-(1-&gt;3)-[beta-D-GlcNAc-(1-&gt;2)-alpha-D-Man-(1-&gt;6)]-beta-D-Man-(1-&gt;4)-beta-D-GlcNAc-(1-&gt;4)-beta-D-GlcNAc}-L-asparaginyl-[protein] + UDP-N-acetyl-alpha-D-glucosamine = N(4)-{beta-D-GlcNAc-(1-&gt;2)-[beta-D-GlcNAc-(1-&gt;4)]-alpha-D-Man-(1-&gt;3)-[beta-D-GlcNAc-(1-&gt;2)-[beta-D-GlcNAc-(1-&gt;6)]-alpha-D-Man-(1-&gt;6)]-beta-D-Man-(1-&gt;4)-beta-D-GlcNAc-(1-&gt;4)-beta-D-GlcNAc}-L-asparaginyl-[protein] + UDP + H(+). It participates in protein modification; protein glycosylation. Activity is increased by Mn(2+) and Mg(2+). Catalyzes the addition of N-acetylglucosamine (GlcNAc) in beta 1-6 linkage to the alpha-linked mannose of biantennary N-linked oligosaccharides. Catalyzes an important step in the biosynthesis of branched, complex-type N-glycans, such as those found on EGFR, TGFR (TGF-beta receptor) and CDH2. Via its role in the biosynthesis of complex N-glycans, plays an important role in the activation of cellular signaling pathways, reorganization of the actin cytoskeleton, cell-cell adhesion and cell migration. MGAT5-dependent EGFR N-glycosylation enhances the interaction between EGFR and LGALS3 and thereby prevents rapid EGFR endocytosis and prolongs EGFR signaling. Required for efficient interaction between TGFB1 and its receptor. Enhances activation of intracellular signaling pathways by several types of growth factors, including FGF2, PDGF, IGF, TGFB1 and EGF. MGAT5-dependent CDH2 N-glycosylation inhibits CDH2-mediated homotypic cell-cell adhesion and contributes to the regulation of downstream signaling pathways. Promotes cell migration. Contributes to the regulation of the inflammatory response. MGAT5-dependent TCR N-glycosylation enhances the interaction between TCR and LGALS3, limits agonist-induced TCR clustering, and thereby dampens TCR-mediated responses to antigens. Required for normal leukocyte evasation and accumulation at sites of inflammation. Inhibits attachment of monocytes to the vascular endothelium and subsequent monocyte diapedesis. Functionally, promotes proliferation of umbilical vein endothelial cells and angiogenesis, at least in part by promoting the release of the growth factor FGF2 from the extracellular matrix. The sequence is that of Alpha-1,6-mannosylglycoprotein 6-beta-N-acetylglucosaminyltransferase A (MGAT5) from Homo sapiens (Human).